The chain runs to 93 residues: Acylphosphatase (93 aa).

The cysteines at positions 5 and 49 are disulfide-linked. An Acylphosphatase-like domain is found at 5-93 (CIIAWVYGRV…ETLTGFSIRY (89 aa)). Asn-38 is a catalytic residue.

The protein belongs to the acylphosphatase family.

The enzyme catalyses an acyl phosphate + H2O = a carboxylate + phosphate + H(+). The protein is Acylphosphatase of Salmonella paratyphi A (strain ATCC 9150 / SARB42).